Reading from the N-terminus, the 225-residue chain is GrpE protein homolog 2, mitochondrial (225 aa).

The N-terminal 32 residues, 1–32 (MAVRSLWACRLRVQRLLAWSAAWESKGWPLPF), are a transit peptide targeting the mitochondrion. An N6-acetyllysine modification is found at K142.

Belongs to the GrpE family. Probable component of the PAM complex at least composed of a mitochondrial HSP70 protein, GRPEL1 or GRPEL2, TIMM44, TIMM16/PAM16 and TIMM14/DNAJC19.

Its subcellular location is the mitochondrion matrix. Essential component of the PAM complex, a complex required for the translocation of transit peptide-containing proteins from the inner membrane into the mitochondrial matrix in an ATP-dependent manner. Seems to control the nucleotide-dependent binding of mitochondrial HSP70 to substrate proteins. Stimulates ATPase activity of mt-HSP70. May also serve to modulate the interconversion of oligomeric (inactive) and monomeric (active) forms of mt-HSP70. This chain is GrpE protein homolog 2, mitochondrial (GRPEL2), found in Pongo abelii (Sumatran orangutan).